We begin with the raw amino-acid sequence, 217 residues long: Large ribosomal subunit protein uL4c (217 aa).

The segment at 51-85 (HRNRNAHTQTRGEVSGGGRKPWKQKGTGRARAGSN) is disordered.

This sequence belongs to the universal ribosomal protein uL4 family. In terms of assembly, part of the 50S ribosomal subunit.

It is found in the plastid. The protein resides in the chloroplast. Probably binds the 23S rRNA. This is Large ribosomal subunit protein uL4c (rpl4) from Gracilaria tenuistipitata var. liui (Red alga).